The sequence spans 1391 residues: DNA-directed RNA polymerase subunit beta' (1391 aa).

Residues cysteine 72, cysteine 74, cysteine 87, and cysteine 90 each contribute to the Zn(2+) site. 3 residues coordinate Mg(2+): aspartate 462, aspartate 464, and aspartate 466. Residues cysteine 816, cysteine 890, cysteine 897, and cysteine 900 each contribute to the Zn(2+) site.

Belongs to the RNA polymerase beta' chain family. As to quaternary structure, the RNAP catalytic core consists of 2 alpha, 1 beta, 1 beta' and 1 omega subunit. When a sigma factor is associated with the core the holoenzyme is formed, which can initiate transcription. Requires Mg(2+) as cofactor. Zn(2+) is required as a cofactor.

The enzyme catalyses RNA(n) + a ribonucleoside 5'-triphosphate = RNA(n+1) + diphosphate. DNA-dependent RNA polymerase catalyzes the transcription of DNA into RNA using the four ribonucleoside triphosphates as substrates. This Neisseria gonorrhoeae (strain NCCP11945) protein is DNA-directed RNA polymerase subunit beta'.